A 431-amino-acid polypeptide reads, in one-letter code: Elongation factor 1-gamma (431 aa).

Residues 2 to 84 (VKGTLYTYPE…LLANEQLRGG (83 aa)) enclose the GST N-terminal domain. The GST C-terminal domain occupies 86-212 (CPFVQAQVQQ…YKLCEKALVF (127 aa)). The tract at residues 223–261 (KTGAAKPQQQAQQQKQEKKPKEKKEAPKKAAEPAEELDA) is disordered. A compositionally biased stretch (low complexity) spans 226-236 (AAKPQQQAQQQ). The segment covering 237–254 (KQEKKPKEKKEAPKKAAE) has biased composition (basic and acidic residues). The 160-residue stretch at 272-431 (SKDPFDALPK…RKFNQGKIFK (160 aa)) folds into the EF-1-gamma C-terminal domain. Ser-294 bears the Phosphoserine mark.

In terms of assembly, interacts with microtubules. May interact with BicDR; the interaction is probably indirect. Interacts (via C-terminus) with Doa; the interaction is probably direct, is transient and leads to phosphorylation of eEF1gamma by Doa. EF-1 is composed of four subunits: alpha, beta, delta, and gamma. Post-translationally, phosphorylated on Ser-294 by LAMMER kinases, including Doa. Phosphorylation on Ser-294 by Doa is required for negative regulation of microtubule-based transport.

It is found in the cytoplasm. The protein resides in the nucleus. Its subcellular location is the cytoskeleton. In terms of biological role, microtubule binding protein involved in regulation of microtubule-based transport. Probably plays a role in anchoring the EF-1 complex to other cellular components. Probably involved in formation and/or development of mechanosensory organs during metamorphosis. Required for cellular and organismal viability. Not essential for the innate immune response to bacterial infection. The sequence is that of Elongation factor 1-gamma from Drosophila melanogaster (Fruit fly).